The sequence spans 509 residues: L-aspartate semialdehyde sulfurtransferase (509 aa).

Residue C133 is the Cysteine persulfide intermediate of the active site. CBS domains are found at residues 394 to 450 (LSKP…NKKT) and 455 to 509 (MTRN…GGKK). Positions 395, 399, and 421 each coordinate S-methyl-5'-thioadenosine. S-adenosyl-L-methionine is bound by residues D439, T456, I460, and 479-482 (NISG). 497–500 (TSED) provides a ligand contact to S-methyl-5'-thioadenosine.

Belongs to the L-aspartate semialdehyde sulfurtransferase family. As to quaternary structure, homodimer. May form a complex with MJ0099.

The catalysed reaction is L-aspartate 4-semialdehyde + reduced 2[4Fe-4S]-[ferredoxin] + hydrogen sulfide + 3 H(+) = oxidized 2[4Fe-4S]-[ferredoxin] + L-homocysteine + H2O. Its pathway is amino-acid biosynthesis. Its activity is regulated as follows. The ligand-induced conformational reorganization of the protein could be an important regulatory mechanism. Its function is as follows. Required for O-acetylhomoserine sulfhydrylase (OAHS)-independent homocysteine (Hcy) biosynthesis. Together with MJ0099, catalyzes the condensation of sulfide with aspartate semialdehyde to generate homocysteine. Likely functions through persulfide intermediate. This chain is L-aspartate semialdehyde sulfurtransferase, found in Methanocaldococcus jannaschii (strain ATCC 43067 / DSM 2661 / JAL-1 / JCM 10045 / NBRC 100440) (Methanococcus jannaschii).